Reading from the N-terminus, the 202-residue chain is Ribonuclease HII (202 aa).

Positions 14–202 (LPLAGVDEAG…VAQFSLFPAA (189 aa)) constitute an RNase H type-2 domain. A divalent metal cation-binding residues include Asp20, Glu21, and Asp111.

It belongs to the RNase HII family. Mn(2+) is required as a cofactor. It depends on Mg(2+) as a cofactor.

The protein resides in the cytoplasm. It catalyses the reaction Endonucleolytic cleavage to 5'-phosphomonoester.. Its function is as follows. Endonuclease that specifically degrades the RNA of RNA-DNA hybrids. The protein is Ribonuclease HII of Rhizorhabdus wittichii (strain DSM 6014 / CCUG 31198 / JCM 15750 / NBRC 105917 / EY 4224 / RW1) (Sphingomonas wittichii).